Reading from the N-terminus, the 404-residue chain is tRNA N6-adenosine threonylcarbamoyltransferase, mitochondrial (404 aa).

Residues 1–27 (MFQSCLPGALRSWSRGVFSTSTRPRLV) constitute a mitochondrion transit peptide. A divalent metal cation-binding residues include H135 and H139. Residues 157 to 161 (LVSGG), D190, G210, E214, 317 to 318 (SN), and T345 contribute to the substrate site. Position 346 (D346) interacts with a divalent metal cation.

The protein belongs to the KAE1 / TsaD family. Monomer. It depends on a divalent metal cation as a cofactor.

The protein resides in the mitochondrion. It carries out the reaction L-threonylcarbamoyladenylate + adenosine(37) in tRNA = N(6)-L-threonylcarbamoyladenosine(37) in tRNA + AMP + H(+). Required for the formation of a threonylcarbamoyl group on adenosine at position 37 (t(6)A37) in mitochondrial tRNAs that read codons beginning with adenine. Probably involved in the transfer of the threonylcarbamoyl moiety of threonylcarbamoyl-AMP (TC-AMP) to the N6 group of A37. Involved in mitochondrial genome maintenance. This chain is tRNA N6-adenosine threonylcarbamoyltransferase, mitochondrial, found in Danio rerio (Zebrafish).